Consider the following 1962-residue polypeptide: PIII-type proteinase (1962 aa).

Positions 1 to 33 (MQRKKKGLSILLAGTVALGALAVLPVGEIQAKA) are cleaved as a signal peptide. Positions 34 to 187 (AISQQTKGSS…VTLAKVYYPT (154 aa)) are excised as a propeptide. The 507-residue stretch at 191-697 (ANSMANVQAV…AGLVDVKAAI (507 aa)) folds into the Peptidase S8 domain. Residues D217, H281, and S620 each act as charge relay system in the active site. The interval 1796-1938 (GKGDGTTGTS…KTGETTERPA (143 aa)) is disordered. The segment covering 1797 to 1812 (KGDGTTGTSDKGGGQG) has biased composition (gly residues). Polar residues-rich tracts occupy residues 1856–1865 (RNGQLTSGTS) and 1890–1903 (SQPSSGGNIPTNPA). The LPXTG sorting signal signature appears at 1927 to 1931 (LPKTG). T1930 carries the post-translational modification Pentaglycyl murein peptidoglycan amidated threonine. A propeptide spans 1931-1962 (GETTERPAFGFLGVIVVSLMGVLGLKRKQREE) (removed by sortase).

Belongs to the peptidase S8 family.

It is found in the secreted. Its subcellular location is the cell wall. The enzyme catalyses Endopeptidase activity with very broad specificity, although some subsite preference have been noted, e.g. large hydrophobic residues in the P1 and P4 positions, and Pro in the P2 position. Best known for its action on caseins, although it has been shown to hydrolyze hemoglobin and oxidized insulin B-chain.. In terms of biological role, protease which breaks down milk proteins during the growth of the bacteria on milk. The sequence is that of PIII-type proteinase (prtP) from Lactococcus lactis subsp. cremoris (strain SK11).